We begin with the raw amino-acid sequence, 259 residues long: Hemin import ATP-binding protein HmuV (259 aa).

The region spanning 6-242 (IQGRDLCVTY…ERIEQVYGYQ (237 aa)) is the ABC transporter domain. ATP is bound at residue 38 to 45 (GPNGAGKS).

Belongs to the ABC transporter superfamily. Heme (hemin) importer (TC 3.A.1.14.5) family. In terms of assembly, the complex is composed of two ATP-binding proteins (HmuV), two transmembrane proteins (HmuU) and a solute-binding protein (HmuT).

It is found in the cell inner membrane. Functionally, part of the ABC transporter complex HmuTUV involved in hemin import. Responsible for energy coupling to the transport system. The protein is Hemin import ATP-binding protein HmuV of Vibrio cholerae serotype O1 (strain ATCC 39315 / El Tor Inaba N16961).